Consider the following 224-residue polypeptide: Transcriptional regulatory protein CiaR (224 aa).

The 114-residue stretch at 3 to 116 (KILLVEDDLG…ELKMRIQALL (114 aa)) folds into the Response regulatory domain. Asp51 is modified (4-aspartylphosphate). The ompR/PhoB-type DNA-binding region spans 124 to 222 (ENTLTYGNIV…LRSVGYLLKD (99 aa)).

Phosphorylated by CiaH.

The protein localises to the cytoplasm. Its function is as follows. Member of the two-component regulatory system CiaH/CiaR. Involved in early steps of competence regulation and in penicillin susceptibility. The polypeptide is Transcriptional regulatory protein CiaR (ciaR) (Streptococcus pneumoniae (strain ATCC BAA-255 / R6)).